The sequence spans 225 residues: Alpha-tubulin N-acetyltransferase 1 (225 aa).

The region spanning 1–190 (MEFPFDVDAL…NNFVIFEGFF (190 aa)) is the N-acetyltransferase domain. The residue at position 56 (Lys56) is an N6-acetyllysine; by autocatalysis. 124–137 (FYIHESLQRHGHGR) contacts acetyl-CoA. Lys146 is subject to N6-acetyllysine; by autocatalysis. 160–169 (SQKLLKFLNK) contributes to the acetyl-CoA binding site. The segment at 195–225 (PPARKLPPKRAEGDIKPYSSSDRESGLPQGW) is disordered. A compositionally biased stretch (basic and acidic residues) spans 203 to 219 (KRAEGDIKPYSSSDRES). Lys210 carries the post-translational modification N6-acetyllysine; by autocatalysis.

This sequence belongs to the acetyltransferase ATAT1 family. Component of the BBSome complex. Interacts with AP2 alpha-adaptins, including AP2A2, but not with AP1 gamma-adaptin (AP1G1/AP1G2); this interaction is required for efficient alpha-tubulin acetylation, hence clathrin-coated pits are sites of microtubule acetylation. Autoacetylation strongly increases tubulin acetylation.

The protein resides in the cytoplasm. Its subcellular location is the membrane. The protein localises to the clathrin-coated pit. It is found in the cell junction. It localises to the focal adhesion. The protein resides in the cell projection. Its subcellular location is the axon. The protein localises to the cytoskeleton. It is found in the spindle. The enzyme catalyses L-lysyl-[alpha-tubulin] + acetyl-CoA = N(6)-acetyl-L-lysyl-[alpha-tubulin] + CoA + H(+). Its function is as follows. Specifically acetylates 'Lys-40' in alpha-tubulin on the lumenal side of microtubules. Promotes microtubule destabilization and accelerates microtubule dynamics; this activity may be independent of acetylation activity. Acetylates alpha-tubulin with a slow enzymatic rate, due to a catalytic site that is not optimized for acetyl transfer. Enters the microtubule through each end and diffuses quickly throughout the lumen of microtubules. Acetylates only long/old microtubules because of its slow acetylation rate since it does not have time to act on dynamically unstable microtubules before the enzyme is released. Required for normal sperm flagellar function. Promotes directional cell locomotion and chemotaxis, through AP2A2-dependent acetylation of alpha-tubulin at clathrin-coated pits that are concentrated at the leading edge of migrating cells. May facilitate primary cilium assembly. The chain is Alpha-tubulin N-acetyltransferase 1 from Bos taurus (Bovine).